The chain runs to 203 residues: HTH-type transcriptional regulator CymR (203 aa).

Residues 13 to 73 (METQGKLIAA…ATFEWLYEQI (61 aa)) form the HTH tetR-type domain. A DNA-binding region (H-T-H motif) is located at residues 36–55 (RIADVPGAAGVSRGAQSHHF).

Involved in the repression of the cym and cmt operons which are responsible of the p-cymene degradation. This is HTH-type transcriptional regulator CymR from Pseudomonas putida (Arthrobacter siderocapsulatus).